Reading from the N-terminus, the 386-residue chain is Meiotic chromosome segregation protein C1539.02 (386 aa).

Disordered regions lie at residues Met-1 to Ser-28, Arg-46 to Gln-85, and Asp-366 to Gly-386. Residues Ala-15–Ser-28 are compositionally biased toward polar residues.

Its subcellular location is the nucleus. Functionally, required for meiotic chromosome segregation. The chain is Meiotic chromosome segregation protein C1539.02 from Schizosaccharomyces pombe (strain 972 / ATCC 24843) (Fission yeast).